The following is a 308-amino-acid chain: MAEPILHIEGLDKKIGSKQILKQISMDVMEGEIIGLLGPNGSGKTTLIRIIVGLLKQNSGSVTISGFQHDTEFEKAMEAVGAIVENPEFYPYLTGWENLKHFANMHKKIADERLDEVVERVGLTSAIHDKVKTYSLGMRQRLGIAQAILHRPKLLILDEPTNGLDPAGMKDFRDHIKELAEMEGTAVLFATHLLREVEDLCDRVIIIQKGEIKAEVSLQGTDQTTEKAIIEVQPQEKALNWLTGNQYQAESQDGTIVVEVAKENIPELNRSLVGQDLNVFSITPYTQSLEDEFIKATTAHQEEGEELV.

Residues 6–234 (LHIEGLDKKI…TEKAIIEVQP (229 aa)) form the ABC transporter domain. 38–45 (GPNGSGKT) is an ATP binding site.

This sequence belongs to the ABC transporter superfamily.

This is an uncharacterized protein from Bacillus subtilis (strain 168).